The primary structure comprises 50 residues: Protein PsbN (50 aa).

The helical transmembrane segment at 14-34 (IAVTILALLLALTGFGLWTAF) threads the bilayer.

It belongs to the PsbN family.

The protein resides in the cellular thylakoid membrane. Its function is as follows. May play a role in photosystem I and II biogenesis. The polypeptide is Protein PsbN (Prochlorococcus marinus (strain MIT 9301)).